Here is a 168-residue protein sequence, read N- to C-terminus: uncharacterized protein (168 aa).

The N-acetyltransferase domain maps to 7 to 168; that stretch reads ERIDTLKTGD…TAKGWPDISM (162 aa).

This is an uncharacterized protein from Azospirillum brasilense.